A 187-amino-acid chain; its full sequence is Elongation factor P (187 aa).

This sequence belongs to the elongation factor P family.

It is found in the cytoplasm. The protein operates within protein biosynthesis; polypeptide chain elongation. Its function is as follows. Involved in peptide bond synthesis. Stimulates efficient translation and peptide-bond synthesis on native or reconstituted 70S ribosomes in vitro. Probably functions indirectly by altering the affinity of the ribosome for aminoacyl-tRNA, thus increasing their reactivity as acceptors for peptidyl transferase. The sequence is that of Elongation factor P from Prochlorococcus marinus (strain NATL1A).